The primary structure comprises 583 residues: Septin-9 (583 aa).

An N-acetylmethionine modification is found at methionine 1. Positions 1-14 (MKKSYSGVTRTSSG) are enriched in polar residues. The interval 1–49 (MKKSYSGVTRTSSGRLRRLADPTGPALKRSFEVEEIEPPNSTPPRRVQT) is disordered. Serine 30 bears the Phosphoserine mark. Residues threonine 42 and threonine 49 each carry the phosphothreonine modification. Lysine 62 bears the N6-acetyllysine mark. The segment at 79–105 (DSLSQRSPKPSLRRVELAGAKAPEPMS) is disordered. Residues serine 82, serine 85, and serine 89 each carry the phosphoserine modification. Threonine 143 carries the phosphothreonine modification. The disordered stretch occupies residues 166–252 (VETPASKIPE…TPSCVGDMAD (87 aa)). The segment covering 204–221 (LPSQTLENSEAPMSQLQS) has biased composition (polar residues). Position 276 is a phosphotyrosine (tyrosine 276). A Septin-type G domain is found at 293-565 (QGFEFNIMVV…EAYRVKRLNE (273 aa)). Residues 303–310 (GQSGLGKS) form a G1 motif region. A GTP-binding site is contributed by 303-310 (GQSGLGKS). Serine 325 and serine 330 each carry phosphoserine. GTP is bound by residues threonine 337, glycine 363, 443–451 (KADTLTLEE), glycine 499, and arginine 514. The G3 motif stretch occupies residues 360 to 363 (DTPG). Residues 442-445 (AKAD) are G4 motif.

This sequence belongs to the TRAFAC class TrmE-Era-EngA-EngB-Septin-like GTPase superfamily. Septin GTPase family. In terms of assembly, septins polymerize into heterooligomeric protein complexes that form filaments, and associate with cellular membranes, actin filaments, and microtubules. GTPase activity is required for filament formation. Interacts with SEPTIN2, SEPTIN6, SEPTIN7, SEPTIN11 and SEPTIN14. Interacts with RTKN and ARHGEF18. In terms of tissue distribution, expressed in all tissues examined except muscle. Isoforms are differentially expressed in testes, kidney, liver, heart, spleen and brain.

It localises to the cytoplasm. It is found in the cytoskeleton. Filament-forming cytoskeletal GTPase. May play a role in cytokinesis (Potential). The chain is Septin-9 from Mus musculus (Mouse).